A 551-amino-acid polypeptide reads, in one-letter code: Synapse-associated protein of 47 kDa (551 aa).

2 disordered regions span residues alanine 20–arginine 72 and alanine 117–lysine 198. 3 stretches are compositionally biased toward low complexity: residues proline 26 to alanine 59, alanine 117 to proline 128, and aspartate 137 to valine 146. Phosphoserine occurs at positions 178 and 182. Positions serine 182 to glycine 197 are enriched in gly residues. The residue at position 186 (threonine 186) is a Phosphothreonine. Residues valine 295–isoleucine 347 form the BSD domain. Positions valine 360–valine 391 are disordered. Residues alanine 373–lysine 386 show a composition bias toward basic and acidic residues. Phosphoserine is present on serine 433. The tract at residues lysine 487–lysine 551 is disordered. Acidic residues predominate over residues aspartate 514–proline 523. Over residues threonine 524–asparagine 535 the composition is skewed to polar residues. Threonine 530 carries the post-translational modification Phosphothreonine. Positions aspartate 536–lysine 551 are enriched in acidic residues.

Expressed specifically in neurons and transported to synaptic terminals.

The chain is Synapse-associated protein of 47 kDa (Sap47) from Drosophila melanogaster (Fruit fly).